An 880-amino-acid polypeptide reads, in one-letter code: GAS2-like protein 2 (880 aa).

Residues 32–159 form the Calponin-homology (CH) domain; it reads EAMKEDLAEW…CLLELGRRAW (128 aa). The tract at residues 180-200 is disordered; sequence RRELALPPPDPSPPAPPRRQP. Residues 185–198 are compositionally biased toward pro residues; it reads LPPPDPSPPAPPRR. Residues 201–273 form the GAR domain; sequence CHFRNLDQMV…HYLDKHDPCR (73 aa). 4 disordered regions span residues 283–360, 372–437, 489–533, and 676–880; these read SFLK…MAPF, WRQP…NPTP, ESVR…ELGR, and APTG…ESWV. Residues 301–315 show a composition bias toward polar residues; sequence GPSQTQPTMTISRSQ. The tract at residues 438–880 is interaction with ADORA2A; the sequence is QRLRAIEATT…PLPPEEESWV (443 aa). Positions 506–515 are enriched in pro residues; that stretch reads RLPPARPPTP. Over residues 725–734 the composition is skewed to polar residues; that stretch reads QDCSASTVSA. 2 stretches are compositionally biased toward basic residues: residues 757 to 767 and 774 to 785; these read KGRRTLRKPKR and LKLRPRIRPRRD.

The protein belongs to the GAS2 family. In terms of assembly, interacts with ADORA2A (via its cytoplasmic C-terminal domain). Interacts with GNAS, GNAL, GNAQ, and GNA13. Interacts with MAPRE1. As to expression, expressed in bronchial and nasal epithelial cells (at protein level). Expressed in brain, kidney, lung, testis, fallopian tubes, and skeletal muscle. Expressed at low levels in stomach and colon.

The protein resides in the cytoplasm. Its subcellular location is the cytoskeleton. The protein localises to the cell membrane. It is found in the stress fiber. It localises to the cilium basal body. Involved in the cross-linking of microtubules and microfilaments. Regulates microtubule dynamics and stability by interacting with microtubule plus-end tracking proteins, such as MAPRE1, to regulate microtubule growth along actin stress fibers. Enhances ADORA2-mediated adenylyl cyclase activation by acting as a scaffold to recruit trimeric G-protein complexes to ADORA2A. Regulates ciliary orientation and performance in cells located in the airway. This Homo sapiens (Human) protein is GAS2-like protein 2 (GAS2L2).